The primary structure comprises 544 residues: Glucans biosynthesis protein G (544 aa).

The signal sequence occupies residues 1 to 34 (MVSLLRCQSSKPYSSLICSLALGVAFALSGTAYA).

This sequence belongs to the OpgD/OpgG family.

The protein resides in the periplasm. It participates in glycan metabolism; osmoregulated periplasmic glucan (OPG) biosynthesis. In terms of biological role, involved in the biosynthesis of osmoregulated periplasmic glucans (OPGs). In Shewanella putrefaciens (strain CN-32 / ATCC BAA-453), this protein is Glucans biosynthesis protein G.